A 283-amino-acid polypeptide reads, in one-letter code: Pyridoxine/pyridoxal/pyridoxamine kinase (283 aa).

Substrate is bound by residues Ser-23 and His-59. Asp-125 lines the ATP pocket. Tyr-136 contacts Mg(2+). ATP-binding positions include Thr-157, Glu-162, Thr-195, 222–225 (HAHV), and Thr-232. Glu-162 provides a ligand contact to Mg(2+). Asp-234 serves as a coordination point for substrate.

The protein belongs to the pyridoxine kinase family. PdxK subfamily. In terms of assembly, homodimer. Mg(2+) serves as cofactor.

It catalyses the reaction pyridoxal + ATP = pyridoxal 5'-phosphate + ADP + H(+). The catalysed reaction is pyridoxine + ATP = pyridoxine 5'-phosphate + ADP + H(+). The enzyme catalyses pyridoxamine + ATP = pyridoxamine 5'-phosphate + ADP + H(+). The protein operates within cofactor metabolism; pyridoxal 5'-phosphate salvage; pyridoxal 5'-phosphate from pyridoxal: step 1/1. It participates in cofactor metabolism; pyridoxal 5'-phosphate salvage; pyridoxine 5'-phosphate from pyridoxine: step 1/1. Its pathway is cofactor metabolism; pyridoxal 5'-phosphate salvage; pyridoxamine 5'-phosphate from pyridoxamine: step 1/1. Functionally, B6-vitamer kinase involved in the salvage pathway of pyridoxal 5'-phosphate (PLP). Catalyzes the phosphorylation of pyridoxine (PN), pyridoxal (PL), and pyridoxamine (PM), forming their respective 5'-phosphorylated esters, i.e. PNP, PLP and PMP. This is Pyridoxine/pyridoxal/pyridoxamine kinase from Bordetella pertussis (strain Tohama I / ATCC BAA-589 / NCTC 13251).